The sequence spans 481 residues: Ras-GEF domain-containing family member 1A (481 aa).

The region spanning 41 to 170 (QDGHLISGSL…AIAQMTQSLL (130 aa)) is the N-terminal Ras-GEF domain. The Ras-GEF domain occupies 214 to 461 (DPLVLAQQLT…FVASFESEGP (248 aa)).

In terms of tissue distribution, detected in brain and spinal cord. Highly expressed in a number of intrahepatic cholangiocarcinoma tissue biopsies.

Its function is as follows. Guanine nucleotide exchange factor (GEF) with specificity for RAP2A, KRAS, HRAS, and NRAS (in vitro). Plays a role in cell migration. In Homo sapiens (Human), this protein is Ras-GEF domain-containing family member 1A (RASGEF1A).